The primary structure comprises 460 residues: Cysteine--tRNA ligase (460 aa).

Zn(2+) is bound at residue C28. The short motif at 30–40 is the 'HIGH' region element; the sequence is VTIYDLCHIGH. Residues C209, H234, and E238 each coordinate Zn(2+). The 'KMSKS' region motif lies at 266–270; that stretch reads KMSKS. K269 contributes to the ATP binding site.

It belongs to the class-I aminoacyl-tRNA synthetase family. As to quaternary structure, monomer. Zn(2+) is required as a cofactor.

The protein resides in the cytoplasm. It carries out the reaction tRNA(Cys) + L-cysteine + ATP = L-cysteinyl-tRNA(Cys) + AMP + diphosphate. The protein is Cysteine--tRNA ligase of Shewanella frigidimarina (strain NCIMB 400).